A 113-amino-acid chain; its full sequence is Hydrogenase maturation factor HypA (113 aa).

His-2 lines the Ni(2+) pocket. Zn(2+) contacts are provided by Cys-73, Cys-76, Cys-89, and Cys-92.

Belongs to the HypA/HybF family.

Functionally, involved in the maturation of [NiFe] hydrogenases. Required for nickel insertion into the metal center of the hydrogenase. This is Hydrogenase maturation factor HypA from Xanthobacter autotrophicus (strain ATCC BAA-1158 / Py2).